The sequence spans 311 residues: Aspartate carbamoyltransferase catalytic subunit (311 aa).

Positions 59 and 60 each coordinate carbamoyl phosphate. L-aspartate is bound at residue K87. Residues R109, H139, and Q142 each coordinate carbamoyl phosphate. Residues R172 and R224 each contribute to the L-aspartate site. 2 residues coordinate carbamoyl phosphate: A265 and P266.

Belongs to the aspartate/ornithine carbamoyltransferase superfamily. ATCase family. Heterododecamer (2C3:3R2) of six catalytic PyrB chains organized as two trimers (C3), and six regulatory PyrI chains organized as three dimers (R2).

The enzyme catalyses carbamoyl phosphate + L-aspartate = N-carbamoyl-L-aspartate + phosphate + H(+). It participates in pyrimidine metabolism; UMP biosynthesis via de novo pathway; (S)-dihydroorotate from bicarbonate: step 2/3. Its function is as follows. Catalyzes the condensation of carbamoyl phosphate and aspartate to form carbamoyl aspartate and inorganic phosphate, the committed step in the de novo pyrimidine nucleotide biosynthesis pathway. The polypeptide is Aspartate carbamoyltransferase catalytic subunit (Streptococcus equi subsp. zooepidemicus (strain MGCS10565)).